Here is a 371-residue protein sequence, read N- to C-terminus: Histidinol-phosphate aminotransferase (371 aa).

An N6-(pyridoxal phosphate)lysine modification is found at Lys-228.

The protein belongs to the class-II pyridoxal-phosphate-dependent aminotransferase family. Histidinol-phosphate aminotransferase subfamily. Homodimer. It depends on pyridoxal 5'-phosphate as a cofactor.

The catalysed reaction is L-histidinol phosphate + 2-oxoglutarate = 3-(imidazol-4-yl)-2-oxopropyl phosphate + L-glutamate. It functions in the pathway amino-acid biosynthesis; L-histidine biosynthesis; L-histidine from 5-phospho-alpha-D-ribose 1-diphosphate: step 7/9. The polypeptide is Histidinol-phosphate aminotransferase (Thermosynechococcus vestitus (strain NIES-2133 / IAM M-273 / BP-1)).